A 301-amino-acid polypeptide reads, in one-letter code: Bifunctional protein FolD (301 aa).

NADP(+) contacts are provided by residues 164-166 (GRS), Ser-191, and Ile-232.

It belongs to the tetrahydrofolate dehydrogenase/cyclohydrolase family. In terms of assembly, homodimer.

It carries out the reaction (6R)-5,10-methylene-5,6,7,8-tetrahydrofolate + NADP(+) = (6R)-5,10-methenyltetrahydrofolate + NADPH. It catalyses the reaction (6R)-5,10-methenyltetrahydrofolate + H2O = (6R)-10-formyltetrahydrofolate + H(+). The protein operates within one-carbon metabolism; tetrahydrofolate interconversion. Catalyzes the oxidation of 5,10-methylenetetrahydrofolate to 5,10-methenyltetrahydrofolate and then the hydrolysis of 5,10-methenyltetrahydrofolate to 10-formyltetrahydrofolate. The sequence is that of Bifunctional protein FolD from Borreliella afzelii (strain PKo) (Borrelia afzelii).